A 369-amino-acid polypeptide reads, in one-letter code: Anhydro-N-acetylmuramic acid kinase (369 aa).

12–19 (GTSMDGVD) serves as a coordination point for ATP.

This sequence belongs to the anhydro-N-acetylmuramic acid kinase family.

The catalysed reaction is 1,6-anhydro-N-acetyl-beta-muramate + ATP + H2O = N-acetyl-D-muramate 6-phosphate + ADP + H(+). Its pathway is amino-sugar metabolism; 1,6-anhydro-N-acetylmuramate degradation. The protein operates within cell wall biogenesis; peptidoglycan recycling. Catalyzes the specific phosphorylation of 1,6-anhydro-N-acetylmuramic acid (anhMurNAc) with the simultaneous cleavage of the 1,6-anhydro ring, generating MurNAc-6-P. Is required for the utilization of anhMurNAc either imported from the medium or derived from its own cell wall murein, and thus plays a role in cell wall recycling. This Shewanella amazonensis (strain ATCC BAA-1098 / SB2B) protein is Anhydro-N-acetylmuramic acid kinase.